Reading from the N-terminus, the 166-residue chain is Small ribosomal subunit protein uS4 (166 aa).

The region spanning 102–164 (RRLQTIVWRK…HPSCLEVEKE (63 aa)) is the S4 RNA-binding domain.

This sequence belongs to the universal ribosomal protein uS4 family. Part of the 30S ribosomal subunit. Contacts protein S5. The interaction surface between S4 and S5 is involved in control of translational fidelity.

In terms of biological role, one of the primary rRNA binding proteins, it binds directly to 16S rRNA where it nucleates assembly of the body of the 30S subunit. Functionally, with S5 and S12 plays an important role in translational accuracy. The chain is Small ribosomal subunit protein uS4 from Korarchaeum cryptofilum (strain OPF8).